The sequence spans 1373 residues: DNA-directed RNA polymerase subunit beta (1373 aa).

The protein belongs to the RNA polymerase beta chain family. In terms of assembly, the RNAP catalytic core consists of 2 alpha, 1 beta, 1 beta' and 1 omega subunit. When a sigma factor is associated with the core the holoenzyme is formed, which can initiate transcription.

It carries out the reaction RNA(n) + a ribonucleoside 5'-triphosphate = RNA(n+1) + diphosphate. Functionally, DNA-dependent RNA polymerase catalyzes the transcription of DNA into RNA using the four ribonucleoside triphosphates as substrates. The protein is DNA-directed RNA polymerase subunit beta of Rickettsia rickettsii (strain Iowa).